A 258-amino-acid polypeptide reads, in one-letter code: Myogenic factor 5 (258 aa).

Residues Leu21–Cys50 are disordered. The region spanning Asp85–Leu136 is the bHLH domain. Residues Ala220 to Leu258 are disordered.

In terms of assembly, efficient DNA binding requires dimerization with another bHLH protein.

It is found in the nucleus. In terms of biological role, acts as a transcriptional activator that promotes transcription of muscle-specific target genes and plays a role in muscle differentiation. Induces fibroblasts to differentiate into myoblasts. Probable sequence specific DNA-binding protein. This chain is Myogenic factor 5 (MYF5), found in Gallus gallus (Chicken).